Reading from the N-terminus, the 449-residue chain is Phosphoglucosamine mutase (449 aa).

Residue Ser99 is the Phosphoserine intermediate of the active site. Residues Ser99, Asp239, Asp241, and Asp243 each coordinate Mg(2+). Position 99 is a phosphoserine (Ser99).

Belongs to the phosphohexose mutase family. Mg(2+) is required as a cofactor. Activated by phosphorylation.

It catalyses the reaction alpha-D-glucosamine 1-phosphate = D-glucosamine 6-phosphate. Its function is as follows. Catalyzes the conversion of glucosamine-6-phosphate to glucosamine-1-phosphate. This chain is Phosphoglucosamine mutase, found in Finegoldia magna (strain ATCC 29328 / DSM 20472 / WAL 2508) (Peptostreptococcus magnus).